A 448-amino-acid chain; its full sequence is MKDSWSSNSTTSTAIRLVGSPYGTDSPFQPTFTYPIYGEAETIYGYEGLAIKLSVASGSLVPLLEVTYRAKNEATTAEIDDVEGKIKEFLAPDFLSTSSPSAMEEFETVVKADKEFRPLGDKVHSYTRGKVDKGKAKSSTASLASSTLSASDPNARVFEIYRSTWHTPGFREYHRRMQLFTLLFIEGASYIQEDETNWEFFTLYEKVSRDDKQTWHFMGYTSLYKFWCWPDSSRIRLSQFVILPPFQKQGHGGALYTTVYDQIRERANVTELTVEDPSEDFDRLRDGNDLRRLLAPGGFADSAKAQNKLHAPLDKEWIESQRLQHKLAPRQWSRVLEMVQLMNLDTTDHEQVKQYRLQVKARIYRQNKDILMQLEKQQQRSKLQETFEGVVEEYGDMVGVDVEDLLDDGPSGTGALYGADEEEDQEQGQGDRHYSNGNGPPRKMARLA.

Interaction with histone H4 N-terminus regions lie at residues 39-41 (EAE) and 224-226 (YKF). Acetyl-CoA-binding positions include 240–242 (FVI) and 247–253 (QKQGHGG). The active-site Proton donor/acceptor is the E275. The interval 407-448 (DDGPSGTGALYGADEEEDQEQGQGDRHYSNGNGPPRKMARLA) is disordered.

The protein belongs to the HAT1 family. Component of the HAT-B complex composed of at least HAT1 and HAT2. The HAT-B complex binds to histone H4 tail.

It localises to the cytoplasm. The protein resides in the nucleus. The catalysed reaction is L-lysyl-[protein] + acetyl-CoA = N(6)-acetyl-L-lysyl-[protein] + CoA + H(+). In terms of biological role, catalytic component of the histone acetylase B (HAT-B) complex. Acetylates 'Lys-12' of histone H4 which is required for telomeric silencing. Has intrinsic substrate specificity that modifies lysine in recognition sequence GXGKXG. Involved in DNA double-strand break repair. This chain is Histone acetyltransferase type B catalytic subunit (HAT1), found in Mycosarcoma maydis (Corn smut fungus).